Here is a 106-residue protein sequence, read N- to C-terminus: uncharacterized protein (106 aa).

The signal sequence occupies residues 1-22 (MKKHPNLLLGFSVYLSAGTKLT). The tract at residues 23-46 (IPPEAEQHTAPSDNNKRKRAKCDD) is disordered.

This is an uncharacterized protein from Arabidopsis thaliana (Mouse-ear cress).